A 491-amino-acid polypeptide reads, in one-letter code: Mitochondrial distribution and morphology protein 12 (491 aa).

Residues 1–491 (MSIDLNWEAA…VFPSYWTFLV (491 aa)) enclose the SMP-LTD domain. Residues 72 to 82 (ESDSSEDEDGE) are compositionally biased toward acidic residues. Disordered stretches follow at residues 72–123 (ESDS…NHHD), 201–313 (GWPD…MRER), and 389–434 (GDED…QPRR). Basic and acidic residues-rich tracts occupy residues 83–123 (GHDA…NHHD) and 213–229 (MTDH…HNKN). Over residues 230–249 (ETGSPSRPSTAHTNPTQLSH) the composition is skewed to polar residues. Positions 252–262 (SAASSSNNTSN) are enriched in low complexity. Polar residues predominate over residues 270 to 279 (DHTSSTTATT). Residues 400–421 (STANTTTAASGSSTDNNNNNNE) show a composition bias toward low complexity.

It belongs to the MDM12 family. Component of the ER-mitochondria encounter structure (ERMES) or MDM complex, composed of mmm1, mdm10, mdm12 and mdm34. A mmm1 homodimer associates with one molecule of mdm12 on each side in a pairwise head-to-tail manner, and the SMP-LTD domains of mmm1 and mdm12 generate a continuous hydrophobic tunnel for phospholipid trafficking.

The protein resides in the mitochondrion outer membrane. It localises to the endoplasmic reticulum membrane. In terms of biological role, component of the ERMES/MDM complex, which serves as a molecular tether to connect the endoplasmic reticulum (ER) and mitochondria. Components of this complex are involved in the control of mitochondrial shape and protein biogenesis, and function in nonvesicular lipid trafficking between the ER and mitochondria. Mdm12 is required for the interaction of the ER-resident membrane protein mmm1 and the outer mitochondrial membrane-resident beta-barrel protein mdm10. The mdm12-mmm1 subcomplex functions in the major beta-barrel assembly pathway that is responsible for biogenesis of all mitochondrial outer membrane beta-barrel proteins, and acts in a late step after the SAM complex. The mdm10-mdm12-mmm1 subcomplex further acts in the TOM40-specific pathway after the action of the mdm12-mmm1 complex. Essential for establishing and maintaining the structure of mitochondria and maintenance of mtDNA nucleoids. The chain is Mitochondrial distribution and morphology protein 12 from Talaromyces stipitatus (strain ATCC 10500 / CBS 375.48 / QM 6759 / NRRL 1006) (Penicillium stipitatum).